The sequence spans 129 residues: NADH-ubiquinone oxidoreductase chain 3 (129 aa).

The next 3 membrane-spanning stretches (helical) occupy residues phenylalanine 4 to alanine 24, alanine 48 to isoleucine 68, and glycine 82 to leucine 102.

This sequence belongs to the complex I subunit 3 family.

Its subcellular location is the mitochondrion membrane. It carries out the reaction a ubiquinone + NADH + 5 H(+)(in) = a ubiquinol + NAD(+) + 4 H(+)(out). Core subunit of the mitochondrial membrane respiratory chain NADH dehydrogenase (Complex I) that is believed to belong to the minimal assembly required for catalysis. Complex I functions in the transfer of electrons from NADH to the respiratory chain. The immediate electron acceptor for the enzyme is believed to be ubiquinone. The protein is NADH-ubiquinone oxidoreductase chain 3 (NAD3) of Candida albicans (strain SC5314 / ATCC MYA-2876) (Yeast).